A 91-amino-acid polypeptide reads, in one-letter code: Protein RacC (91 aa).

This is Protein RacC (racC) from Escherichia coli (strain K12).